The following is a 207-amino-acid chain: LexA repressor (207 aa).

Positions 29–49 (VREICSAVDLSSTSTVHGHLA) form a DNA-binding region, H-T-H motif. Residues serine 128 and lysine 166 each act as for autocatalytic cleavage activity in the active site.

Belongs to the peptidase S24 family. In terms of assembly, homodimer.

The enzyme catalyses Hydrolysis of Ala-|-Gly bond in repressor LexA.. Represses a number of genes involved in the response to DNA damage (SOS response), including recA and lexA. In the presence of single-stranded DNA, RecA interacts with LexA causing an autocatalytic cleavage which disrupts the DNA-binding part of LexA, leading to derepression of the SOS regulon and eventually DNA repair. The polypeptide is LexA repressor (Lactobacillus johnsonii (strain CNCM I-12250 / La1 / NCC 533)).